A 752-amino-acid polypeptide reads, in one-letter code: uncharacterized protein (752 aa).

A phosphoserine mark is found at S202 and S582. The interval 596 to 752 (EEEKESVEVE…KTGEDGEIVL (157 aa)) is disordered. 2 stretches are compositionally biased toward basic and acidic residues: residues 601 to 613 (SVEV…KNDL) and 641 to 677 (LKSE…HFEV). Polar residues predominate over residues 695–718 (NNVAETILEVTSSPKSSENSQKQS). Phosphoserine occurs at positions 707 and 738.

This is an uncharacterized protein from Schizosaccharomyces pombe (strain 972 / ATCC 24843) (Fission yeast).